We begin with the raw amino-acid sequence, 403 residues long: Prostaglandin E2 receptor EP1 subtype (403 aa).

Residues 1–38 lie on the Extracellular side of the membrane; sequence MSLCGPLNLSLAGEATPCAEPGAPNASAWPPSGRASAS. Residues asparagine 8 and asparagine 25 are each glycosylated (N-linked (GlcNAc...) asparagine). A helical membrane pass occupies residues 39–65; the sequence is PALPIFSMTLGAVSNVLALALLAQAAG. At 66–75 the chain is on the cytoplasmic side; that stretch reads RLRRRRSAAT. Residues 76 to 99 form a helical membrane-spanning segment; it reads FLLFVASLLATDLAGHVIPGALVL. Residues 100–114 lie on the Extracellular side of the membrane; that stretch reads RLYAAGRSPAGGACH. Residues cysteine 113 and cysteine 191 are joined by a disulfide bond. Residues 115–136 form a helical membrane-spanning segment; the sequence is FLGGCMVFFGLCPLLLGCGMAV. Over 137 to 158 the chain is Cytoplasmic; it reads ERCVGVTRPLLHAARVSAARAR. A helical membrane pass occupies residues 159–180; sequence LALAVLAALALAVALLPLARVG. The Extracellular segment spans residues 181–204; it reads RYELQYPGTWCFIGLRPAGGWRQA. A helical membrane pass occupies residues 205–230; that stretch reads LLAGLFAGLGLAALLAALVCNTLSGL. Over 231-295 the chain is Cytoplasmic; the sequence is ALLRARWRRR…ARRARAHDVE (65 aa). A disordered region spans residues 243–287; the sequence is RRRPQACGPDGRRHWGARAPRSASASSSSSVASVPGGSPGRGSAR. A compositionally biased stretch (low complexity) spans 259 to 278; sequence ARAPRSASASSSSSVASVPG. Residues 296 to 322 form a helical membrane-spanning segment; it reads MVGQLVGIMVVSCICWSPLLVLVVLAV. Residues 323-333 are Extracellular-facing; it reads GGWGSSSLQRP. A helical transmembrane segment spans residues 334-355; sequence LFLAVRLASWNQILDPWVYILL. Residues 356–403 are Cytoplasmic-facing; that stretch reads RQAVLRQLLRLLPPRPGAKGSPAGLALTRSAWEASSLRSSRHSSLSHL.

The protein belongs to the G-protein coupled receptor 1 family.

The protein resides in the cell membrane. In terms of biological role, receptor for prostaglandin E2 (PGE2). The activity of this receptor is mediated by G(q) proteins which activate a phosphatidylinositol-calcium second messenger system. May play a role as an important modulator of renal function. Implicated the smooth muscle contractile response to PGE2 in various tissues. This is Prostaglandin E2 receptor EP1 subtype (PTGER1) from Canis lupus familiaris (Dog).